The sequence spans 657 residues: Cyclic-di-AMP phosphodiesterase PdeA (657 aa).

A run of 2 helical transmembrane segments spans residues 13 to 35 (PLYGLIAATIILSVITFFFSWWL) and 37 to 53 (ALVVVGGIILTVAMFYF). The tract at residues 74–137 (RSEEEALVEM…ITGNDEKGIM (64 aa)) is PAS-like. In terms of domain architecture, GGDEF spans 175–303 (NKSVFAVIFL…GGDQVVIKQP (129 aa)). The tract at residues 342–498 (VFVMGHRYPD…IEATALLSGI (157 aa)) is DHH. Mn(2+)-binding residues include histidine 347, aspartate 351, aspartate 353, aspartate 422, histidine 446, and aspartate 501. A DHHA1 region spans residues 592 to 645 (VITLRPDKLIGISARSLGQINVQVIMEKLGGGGHLSNAATQLKDVTIAEAEKQL).

The protein belongs to the GdpP/PdeA phosphodiesterase family. It depends on heme b as a cofactor. Requires Mn(2+) as cofactor.

The protein localises to the cell membrane. It catalyses the reaction 3',3'-c-di-AMP + H2O = 5'-O-phosphonoadenylyl-(3'-&gt;5')-adenosine + H(+). In terms of biological role, has phosphodiesterase (PDE) activity against cyclic-di-AMP (c-di-AMP). Overexpression decreases export of c-di-AMP, leads to slightly increased susceptibility to the antibiotic cefuroxime and somewhat slower growth in macrophages. There are at least 2 PDEs for c-di-AMP in this bacteria (this one and pgpH); this may be the major PDE for intracellular growth in host macrophages. During host infection c-di-AMP is secreted into the host cytoplasm which leads to interferon-beta production and secretion by the host. c-di-AMP is a second messenger that mediates growth, cell wall stability and virulence. May monitor cellular heme or NO levels. This chain is Cyclic-di-AMP phosphodiesterase PdeA, found in Listeria monocytogenes serotype 1/2a (strain 10403S).